The chain runs to 152 residues: D-aminoacyl-tRNA deacylase (152 aa).

A Gly-cisPro motif, important for rejection of L-amino acids motif is present at residues 137–138 (GP).

The protein belongs to the DTD family. Homodimer.

The protein localises to the cytoplasm. It carries out the reaction glycyl-tRNA(Ala) + H2O = tRNA(Ala) + glycine + H(+). The catalysed reaction is a D-aminoacyl-tRNA + H2O = a tRNA + a D-alpha-amino acid + H(+). Its function is as follows. An aminoacyl-tRNA editing enzyme that deacylates mischarged D-aminoacyl-tRNAs. Also deacylates mischarged glycyl-tRNA(Ala), protecting cells against glycine mischarging by AlaRS. Acts via tRNA-based rather than protein-based catalysis; rejects L-amino acids rather than detecting D-amino acids in the active site. By recycling D-aminoacyl-tRNA to D-amino acids and free tRNA molecules, this enzyme counteracts the toxicity associated with the formation of D-aminoacyl-tRNA entities in vivo and helps enforce protein L-homochirality. This chain is D-aminoacyl-tRNA deacylase, found in Geobacter sulfurreducens (strain ATCC 51573 / DSM 12127 / PCA).